Here is a 405-residue protein sequence, read N- to C-terminus: Protein NCA1 (405 aa).

The disordered stretch occupies residues 1 to 85 (MTTTSVCPFS…GNLNKDSTDS (85 aa)). Basic and acidic residues-rich tracts occupy residues 13-24 (ARPDDGSTRKQG) and 37-48 (ARPDDASARKQG). A compositionally biased stretch (polar residues) spans 76 to 85 (GNLNKDSTDS). The segment at 108-142 (CMLCQALLYESSRCVPCTHVFCKVCLTRFKDCPLC) adopts an RING-type zinc-finger fold. TPR repeat units follow at residues 247–280 (GAVL…LMKL) and 292–325 (SVSL…RRDA).

In terms of assembly, interacts with the catalases CAT1, CAT2 and CAT3. This interaction is not induced by alkaline stress or H(2)O(2) and NaCl treatments. As to expression, expressed in roots, stems, leaves, flowers and siliques.

The protein localises to the cytoplasm. It localises to the nucleus. Has holdase chaperone activity that may fold catalase to a functional structure. Not required for the peroxisome import of catalases. Required for the activity of catalases and acts mainly at the post-transcriptional level. In Arabidopsis thaliana (Mouse-ear cress), this protein is Protein NCA1.